The primary structure comprises 303 residues: ATP phosphoribosyltransferase (303 aa).

Belongs to the ATP phosphoribosyltransferase family. Long subfamily. It depends on Mg(2+) as a cofactor.

Its subcellular location is the cytoplasm. It catalyses the reaction 1-(5-phospho-beta-D-ribosyl)-ATP + diphosphate = 5-phospho-alpha-D-ribose 1-diphosphate + ATP. Its pathway is amino-acid biosynthesis; L-histidine biosynthesis; L-histidine from 5-phospho-alpha-D-ribose 1-diphosphate: step 1/9. Its activity is regulated as follows. Feedback inhibited by histidine. Functionally, catalyzes the condensation of ATP and 5-phosphoribose 1-diphosphate to form N'-(5'-phosphoribosyl)-ATP (PR-ATP). Has a crucial role in the pathway because the rate of histidine biosynthesis seems to be controlled primarily by regulation of HisG enzymatic activity. This is ATP phosphoribosyltransferase from Haemophilus influenzae (strain 86-028NP).